The sequence spans 96 residues: Muconolactone Delta-isomerase (96 aa).

The protein belongs to the muconolactone Delta-isomerase family. Homodecamer.

It carries out the reaction (S)-muconolactone = (4,5-dihydro-5-oxofuran-2-yl)-acetate. It participates in aromatic compound metabolism; beta-ketoadipate pathway; 5-oxo-4,5-dihydro-2-furylacetate from catechol: step 3/3. The chain is Muconolactone Delta-isomerase (catC) from Acinetobacter baylyi (strain ATCC 33305 / BD413 / ADP1).